The primary structure comprises 154 residues: Myoglobin (154 aa).

A Globin domain is found at 2–148; the sequence is GLSDGEWQSV…FRNDIAAKYK (147 aa). S4 bears the Phosphoserine mark. H65 is a nitrite binding site. H65 serves as a coordination point for O2. T68 bears the Phosphothreonine mark. H94 serves as a coordination point for heme b.

This sequence belongs to the globin family. As to quaternary structure, monomeric.

It localises to the cytoplasm. The protein localises to the sarcoplasm. It catalyses the reaction Fe(III)-heme b-[protein] + nitric oxide + H2O = Fe(II)-heme b-[protein] + nitrite + 2 H(+). The enzyme catalyses H2O2 + AH2 = A + 2 H2O. Its function is as follows. Monomeric heme protein which primary function is to store oxygen and facilitate its diffusion within muscle tissues. Reversibly binds oxygen through a pentacoordinated heme iron and enables its timely and efficient release as needed during periods of heightened demand. Depending on the oxidative conditions of tissues and cells, and in addition to its ability to bind oxygen, it also has a nitrite reductase activity whereby it regulates the production of bioactive nitric oxide. Under stress conditions, like hypoxia and anoxia, it also protects cells against reactive oxygen species thanks to its pseudoperoxidase activity. This Perodicticus potto edwarsi (Potto) protein is Myoglobin (MB).